We begin with the raw amino-acid sequence, 270 residues long: Aliphatic sulfonates import ATP-binding protein SsuB (270 aa).

One can recognise an ABC transporter domain in the interval 17–238 (LASKGLRKTF…ARGSHRLAAL (222 aa)). 49 to 56 (GRSGCGKS) contacts ATP. The disordered stretch occupies residues 248-270 (STPGTAPEPDPVAPLPTQLRWAH).

The protein belongs to the ABC transporter superfamily. Aliphatic sulfonates importer (TC 3.A.1.17.2) family. As to quaternary structure, the complex is composed of two ATP-binding proteins (SsuB), two transmembrane proteins (SsuC) and a solute-binding protein (SsuA).

Its subcellular location is the cell inner membrane. The enzyme catalyses ATP + H2O + aliphatic sulfonate-[sulfonate-binding protein]Side 1 = ADP + phosphate + aliphatic sulfonateSide 2 + [sulfonate-binding protein]Side 1.. Functionally, part of the ABC transporter complex SsuABC involved in aliphatic sulfonates import. Responsible for energy coupling to the transport system. This is Aliphatic sulfonates import ATP-binding protein SsuB from Pseudomonas putida (strain ATCC 47054 / DSM 6125 / CFBP 8728 / NCIMB 11950 / KT2440).